The primary structure comprises 95 residues: Protein FAM240C (95 aa).

A disordered region spans residues 68–95 (KMLQGPGRCPDRVPEATESLHTKDKKAA). The span at 76-95 (CPDRVPEATESLHTKDKKAA) shows a compositional bias: basic and acidic residues.

It belongs to the FAM240 family.

The sequence is that of Protein FAM240C (FAM240C) from Homo sapiens (Human).